The following is a 461-amino-acid chain: Secreted 45 kDa protein (461 aa).

The N-terminal stretch at 1-27 (MKKKIISAILMSTVILSAAAPLSGVYA) is a signal peptide. A compositionally biased stretch (low complexity) spans 264-329 (SSASASSSQA…GNTNSGTSTG (66 aa)). The interval 264 to 343 (SSASASSSQA…TTTGGSGINS (80 aa)) is disordered. A compositionally biased stretch (gly residues) spans 330–340 (NTGGTTTGGSG). Residues 330–459 (NTGGTTTGGS…VSASGVTFLM (130 aa)) form the Peptidase C51 domain.

The polypeptide is Secreted 45 kDa protein (usp45) (Lactococcus lactis subsp. cremoris (strain MG1363)).